A 236-amino-acid polypeptide reads, in one-letter code: 1-(5-phosphoribosyl)-5-[(5-phosphoribosylamino)methylideneamino] imidazole-4-carboxamide isomerase (236 aa).

Asp8 functions as the Proton acceptor in the catalytic mechanism. Residue Asp129 is the Proton donor of the active site.

The protein belongs to the HisA/HisF family.

It is found in the cytoplasm. The enzyme catalyses 1-(5-phospho-beta-D-ribosyl)-5-[(5-phospho-beta-D-ribosylamino)methylideneamino]imidazole-4-carboxamide = 5-[(5-phospho-1-deoxy-D-ribulos-1-ylimino)methylamino]-1-(5-phospho-beta-D-ribosyl)imidazole-4-carboxamide. The protein operates within amino-acid biosynthesis; L-histidine biosynthesis; L-histidine from 5-phospho-alpha-D-ribose 1-diphosphate: step 4/9. The chain is 1-(5-phosphoribosyl)-5-[(5-phosphoribosylamino)methylideneamino] imidazole-4-carboxamide isomerase from Methanoregula boonei (strain DSM 21154 / JCM 14090 / 6A8).